Consider the following 695-residue polypeptide: Ubiquitin carboxyl-terminal hydrolase 20 (695 aa).

Disordered stretches follow at residues 1–20 and 42–162; these read MLMA…SSIL and SLAL…SLFY. Composition is skewed to low complexity over residues 9–20 and 61–86; these read PSSILPRSSSIL and NHDS…SQSV. Acidic residues predominate over residues 112–124; sequence DDIDDDIWGDDDL. The USP domain maps to 176–476; it reads AGLWNLGNSC…DSYILFYARE (301 aa). Cys-185 acts as the Nucleophile in catalysis. Residue His-435 is the Proton acceptor of the active site. Low complexity predominate over residues 556-571; the sequence is SAESSSGEESPMGELL. 2 disordered regions span residues 556-585 and 674-695; these read SAES…PCTE and AREL…LKTT.

It belongs to the peptidase C19 family.

The catalysed reaction is Thiol-dependent hydrolysis of ester, thioester, amide, peptide and isopeptide bonds formed by the C-terminal Gly of ubiquitin (a 76-residue protein attached to proteins as an intracellular targeting signal).. In terms of biological role, recognizes and hydrolyzes the peptide bond at the C-terminal Gly of ubiquitin. Involved in the processing of poly-ubiquitin precursors as well as that of ubiquitinated proteins. This chain is Ubiquitin carboxyl-terminal hydrolase 20 (UBP20), found in Arabidopsis thaliana (Mouse-ear cress).